A 41-amino-acid chain; its full sequence is Trypsin inhibitor (41 aa).

3 cysteine pairs are disulfide-bonded: C15–C26, C17–C24, and C29–C37.

Has two active sites that simultaneously bind and inhibit trypsin. The chain is Trypsin inhibitor from Trichosanthes kirilowii (Chinese snake gourd).